The chain runs to 460 residues: NADH-ubiquinone oxidoreductase chain 4 (460 aa).

Transmembrane regions (helical) follow at residues 20–42, 61–81, 94–113, 117–139, 148–168, 195–215, 225–245, 258–278, 285–304, 308–330, 351–371, 394–414, and 436–456; these read AKWL…LSWL, PLST…ILAS, RAYI…AFGA, IMFY…RWGN, TYFL…LLLM, LWWA…GVHL, PIAG…YGMM, LAYP…SICL, SLIA…GILI, WGFT…LFCL, MILP…LALP, LILT…LFLM, and LLII…ELMW.

The protein belongs to the complex I subunit 4 family.

The protein resides in the mitochondrion membrane. It catalyses the reaction a ubiquinone + NADH + 5 H(+)(in) = a ubiquinol + NAD(+) + 4 H(+)(out). Core subunit of the mitochondrial membrane respiratory chain NADH dehydrogenase (Complex I) that is believed to belong to the minimal assembly required for catalysis. Complex I functions in the transfer of electrons from NADH to the respiratory chain. The immediate electron acceptor for the enzyme is believed to be ubiquinone. This chain is NADH-ubiquinone oxidoreductase chain 4 (MT-ND4), found in Oncorhynchus mykiss (Rainbow trout).